The following is a 142-amino-acid chain: Protein lin-32 (142 aa).

Residues 30-48 (PLQSPNFSLDSPNYPDSLS) show a composition bias toward polar residues. The tract at residues 30–66 (PLQSPNFSLDSPNYPDSLSNGGGKDDKKKCRRYKTPS) is disordered. Residues 72 to 124 (MRRSAANERERRRMNTLNVAYDELREVLPEIDSGKKLSKFETLQMAQKYIECL) form the bHLH domain.

Forms a heterodimer with hlh-2. As to expression, expressed in PVD motor neurons.

It is found in the nucleus. In terms of biological role, probable transcription factor which binds the E box motif 5'-CA[TC][AG]TG-3'. Essential for the specification of the neuroblast cell fate in the development of peripheral sense organs. Its role in the generation of sensory neurons may be through positively regulating the expression of the zinc finger protein ztf-11 during postdeirid neurogenesis. Required for specification of cell fate, acting in concert with lin-32, in the development of the male-specific genital sensilla (simple sense organs) known as rays. Involved in regulating glial specification, perhaps by suppressing a glial fate in different lineages during early embryogenesis. This chain is Protein lin-32, found in Caenorhabditis elegans.